The following is a 223-amino-acid chain: 2-C-methyl-D-erythritol 4-phosphate cytidylyltransferase (223 aa).

It belongs to the IspD/TarI cytidylyltransferase family. IspD subfamily.

It catalyses the reaction 2-C-methyl-D-erythritol 4-phosphate + CTP + H(+) = 4-CDP-2-C-methyl-D-erythritol + diphosphate. The protein operates within isoprenoid biosynthesis; isopentenyl diphosphate biosynthesis via DXP pathway; isopentenyl diphosphate from 1-deoxy-D-xylulose 5-phosphate: step 2/6. Catalyzes the formation of 4-diphosphocytidyl-2-C-methyl-D-erythritol from CTP and 2-C-methyl-D-erythritol 4-phosphate (MEP). The polypeptide is 2-C-methyl-D-erythritol 4-phosphate cytidylyltransferase (Prochlorococcus marinus (strain AS9601)).